We begin with the raw amino-acid sequence, 268 residues long: F-actin-capping protein subunit beta (268 aa).

Belongs to the F-actin-capping protein beta subunit family. As to quaternary structure, component of the F-actin capping complex, composed of a heterodimer of an alpha and a beta subunit.

It is found in the cytoplasm. The protein resides in the cytoskeleton. The protein localises to the actin patch. Its subcellular location is the nucleus. Functionally, F-actin-capping proteins bind in a Ca(2+)-independent manner to the fast growing ends of actin filaments (barbed end) thereby blocking the exchange of subunits at these ends. Unlike other capping proteins (such as gelsolin and severin), these proteins do not sever actin filaments. Competes with formin cdc12 for attachment to the actin filaments barbed ends. Slowly replaces cdc12 on the barbed ends in preparation for filament disassembly during contractile ring constriction. This chain is F-actin-capping protein subunit beta (acp2), found in Schizosaccharomyces pombe (strain 972 / ATCC 24843) (Fission yeast).